The chain runs to 85 residues: Small protein YqaH (85 aa).

In terms of assembly, interacts with domain IV of DnaA and with Spo0A.

Functionally, binds to and counteracts DnaA replication initiation activity; overexpression decreases the number of replication initiation events. Also antagonizes DnaA's transcriptional regulation activity. Ectopic expression during exponential phase stops cell growth 2 hours after induction, leading to filamentation, aberrant chromosome segregation and septoid-trapped nucleoids. Overexpression during sporulation onset leads to dramatic reductions in spore formation. The polypeptide is Small protein YqaH (yqaH) (Bacillus subtilis (strain 168)).